We begin with the raw amino-acid sequence, 250 residues long: Ubiquinone/menaquinone biosynthesis C-methyltransferase UbiE (250 aa).

S-adenosyl-L-methionine-binding positions include S73, D94, and N122 to A123.

The protein belongs to the class I-like SAM-binding methyltransferase superfamily. MenG/UbiE family.

It carries out the reaction a 2-demethylmenaquinol + S-adenosyl-L-methionine = a menaquinol + S-adenosyl-L-homocysteine + H(+). The enzyme catalyses a 2-methoxy-6-(all-trans-polyprenyl)benzene-1,4-diol + S-adenosyl-L-methionine = a 5-methoxy-2-methyl-3-(all-trans-polyprenyl)benzene-1,4-diol + S-adenosyl-L-homocysteine + H(+). The protein operates within quinol/quinone metabolism; menaquinone biosynthesis; menaquinol from 1,4-dihydroxy-2-naphthoate: step 2/2. Its pathway is cofactor biosynthesis; ubiquinone biosynthesis. In terms of biological role, methyltransferase required for the conversion of demethylmenaquinol (DMKH2) to menaquinol (MKH2) and the conversion of 2-polyprenyl-6-methoxy-1,4-benzoquinol (DDMQH2) to 2-polyprenyl-3-methyl-6-methoxy-1,4-benzoquinol (DMQH2). The chain is Ubiquinone/menaquinone biosynthesis C-methyltransferase UbiE from Legionella pneumophila subsp. pneumophila (strain Philadelphia 1 / ATCC 33152 / DSM 7513).